A 243-amino-acid chain; its full sequence is Small ribosomal subunit protein uS2 (243 aa).

It belongs to the universal ribosomal protein uS2 family.

In Aliivibrio salmonicida (strain LFI1238) (Vibrio salmonicida (strain LFI1238)), this protein is Small ribosomal subunit protein uS2.